Here is a 434-residue protein sequence, read N- to C-terminus: Glutamate-1-semialdehyde 2,1-aminomutase 1 (434 aa).

N6-(pyridoxal phosphate)lysine is present on lysine 270.

It belongs to the class-III pyridoxal-phosphate-dependent aminotransferase family. HemL subfamily. As to quaternary structure, homodimer. Pyridoxal 5'-phosphate is required as a cofactor.

Its subcellular location is the cytoplasm. The enzyme catalyses (S)-4-amino-5-oxopentanoate = 5-aminolevulinate. Its pathway is porphyrin-containing compound metabolism; protoporphyrin-IX biosynthesis; 5-aminolevulinate from L-glutamyl-tRNA(Glu): step 2/2. This Bacillus thuringiensis (strain Al Hakam) protein is Glutamate-1-semialdehyde 2,1-aminomutase 1.